A 2290-amino-acid polypeptide reads, in one-letter code: Protein Ycf2 (2290 aa).

1644–1651 (GSIGTGRS) provides a ligand contact to ATP.

It belongs to the Ycf2 family.

Its subcellular location is the plastid. The protein resides in the chloroplast stroma. Functionally, probable ATPase of unknown function. Its presence in a non-photosynthetic plant (Epifagus virginiana) and experiments in tobacco indicate that it has an essential function which is probably not related to photosynthesis. The polypeptide is Protein Ycf2 (Nasturtium officinale (Watercress)).